The sequence spans 247 residues: DNA polymerase sliding clamp (247 aa).

The protein belongs to the PCNA family. As to quaternary structure, homotrimer. The subunits circularize to form a toroid; DNA passes through its center. Replication factor C (RFC) is required to load the toroid on the DNA.

Its function is as follows. Sliding clamp subunit that acts as a moving platform for DNA processing. Responsible for tethering the catalytic subunit of DNA polymerase and other proteins to DNA during high-speed replication. The sequence is that of DNA polymerase sliding clamp from Haloarcula marismortui (strain ATCC 43049 / DSM 3752 / JCM 8966 / VKM B-1809) (Halobacterium marismortui).